Consider the following 138-residue polypeptide: Small ribosomal subunit protein uS17 (138 aa).

2 stretches are compositionally biased toward basic and acidic residues: residues 1-18 (MSEEERNRGAEPEERAEA) and 43-55 (AFDRDAGKVQKDT). The segment at 1–62 (MSEEERNRGA…KDTRRGRRKE (62 aa)) is disordered.

It belongs to the universal ribosomal protein uS17 family. In terms of assembly, part of the 30S ribosomal subunit.

One of the primary rRNA binding proteins, it binds specifically to the 5'-end of 16S ribosomal RNA. The protein is Small ribosomal subunit protein uS17 of Rubrobacter xylanophilus (strain DSM 9941 / JCM 11954 / NBRC 16129 / PRD-1).